Consider the following 731-residue polypeptide: Actin filament-associated protein 1 (731 aa).

Methionine 1 is modified (N-acetylmethionine). Residues valine 46 to glutamate 90 are disordered. Pro residues predominate over residues proline 59–proline 84. The SH3-binding motif lies at proline 70–tryptophan 73. The short motif at tyrosine 93 to alanine 96 is the SH2-binding 1 element. A disordered region spans residues glycine 118 to histidine 138. Residues aspartate 152–serine 248 form the PH 1 domain. Residues glycine 252–serine 318 are disordered. The span at alanine 271–serine 284 shows a compositional bias: basic and acidic residues. Residues serine 283 and serine 284 each carry the phosphoserine modification. The PH 2 domain occupies aspartate 348–glycine 442. The SH2-binding 2 signature appears at tyrosine 452 to valine 457. The disordered stretch occupies residues serine 511–asparagine 550. Position 549 is a phosphoserine (serine 549). Positions lysine 558–alanine 649 form a coiled coil. Positions aspartate 595–threonine 638 are interaction with F-actin. The interval alanine 657–threonine 731 is disordered. Phosphoserine occurs at positions 665, 666, and 669. Position 676 is a phosphothreonine (threonine 676). Residues glutamate 678–threonine 687 are compositionally biased toward polar residues. Phosphoserine occurs at positions 680 and 688. Over residues lysine 721 to threonine 731 the composition is skewed to basic and acidic residues.

As to quaternary structure, monomer and homomultimer. Interacts via its C-terminus with F-actin; probably involving AFAP1 multimers. Interacts with activated SRC SH3-SH2 domains. Interacts via its PH 1 domain with PRKCA, PRKCB and PRKCI. Post-translationally, phosphorylated on tyrosine residues. Widely expressed with highest levels in brain.

It localises to the cytoplasm. The protein resides in the cytoskeleton. It is found in the stress fiber. Functionally, can cross-link actin filaments into both network and bundle structures. May modulate changes in actin filament integrity and induce lamellipodia formation. May function as an adapter molecule that links other proteins, such as SRC and PKC to the actin cytoskeleton. This is Actin filament-associated protein 1 (Afap1) from Rattus norvegicus (Rat).